The primary structure comprises 196 residues: Nucleoid occlusion factor SlmA (196 aa).

The 62-residue stretch at 7–68 (INRREEILQA…GLIEFIEESL (62 aa)) folds into the HTH tetR-type domain. The segment at residues 31-50 (TTAKLAKQVGVSEAALYRHF) is a DNA-binding region (H-T-H motif). Residues 110 to 139 (HALMFENERLRDRINQLFERIETSLRQILR) adopt a coiled-coil conformation.

Belongs to the nucleoid occlusion factor SlmA family. In terms of assembly, homodimer. Interacts with FtsZ.

It is found in the cytoplasm. The protein localises to the nucleoid. Functionally, required for nucleoid occlusion (NO) phenomenon, which prevents Z-ring formation and cell division over the nucleoid. Acts as a DNA-associated cell division inhibitor that binds simultaneously chromosomal DNA and FtsZ, and disrupts the assembly of FtsZ polymers. SlmA-DNA-binding sequences (SBS) are dispersed on non-Ter regions of the chromosome, preventing FtsZ polymerization at these regions. This chain is Nucleoid occlusion factor SlmA, found in Vibrio cholerae serotype O1 (strain ATCC 39315 / El Tor Inaba N16961).